Reading from the N-terminus, the 243-residue chain is Phosphoribosylaminoimidazole-succinocarboxamide synthase (243 aa).

This sequence belongs to the SAICAR synthetase family.

The catalysed reaction is 5-amino-1-(5-phospho-D-ribosyl)imidazole-4-carboxylate + L-aspartate + ATP = (2S)-2-[5-amino-1-(5-phospho-beta-D-ribosyl)imidazole-4-carboxamido]succinate + ADP + phosphate + 2 H(+). It participates in purine metabolism; IMP biosynthesis via de novo pathway; 5-amino-1-(5-phospho-D-ribosyl)imidazole-4-carboxamide from 5-amino-1-(5-phospho-D-ribosyl)imidazole-4-carboxylate: step 1/2. In Lactiplantibacillus plantarum (strain ATCC BAA-793 / NCIMB 8826 / WCFS1) (Lactobacillus plantarum), this protein is Phosphoribosylaminoimidazole-succinocarboxamide synthase.